The sequence spans 381 residues: MPFSNSHNALKLRFPAEDEFPDLSAHNNHMAKVLTPELYAELRAKSTPSGFTLDDVIQTGVDNPGHPYIMTVGCVAGDEESYEVFKDLFDPIIEDRHGGYKPSDEHKTDLNPDNLQGGDDLDPNYVLSSRVRTGRSIRGFCLPPHCSRGERRAIEKLAVEALSSLDGDLAGRYYALKSMTEAEQQQLIDDHFLFDKPVSPLLLASGMARDWPDARGIWHNDNKTFLVWVNEEDHLRVISMQKGGNMKEVFTRFCTGLTQIETLFKSKDYEFMWNPHLGYILTCPSNLGTGLRAGVHIKLPNLGKHEKFSEVLKRLRLQKRGTGGVDTAAVGGVFDVSNADRLGFSEVELVQMVVDGVKLLIEMEQRLEQGQAIDDLMPAQK.

The residue at position 4 (Ser4) is a Phosphoserine. In terms of domain architecture, Phosphagen kinase N-terminal spans 11-98; the sequence is KLRFPAEDEF…FDPIIEDRHG (88 aa). Residue Thr35 is modified to Phosphothreonine. A Glycyl lysine isopeptide (Lys-Gly) (interchain with G-Cter in ubiquitin) cross-link involves residue Lys45. Val72 provides a ligand contact to creatine. The segment covering 96 to 110 has biased composition (basic and acidic residues); the sequence is RHGGYKPSDEHKTDL. A disordered region spans residues 96 to 122; it reads RHGGYKPSDEHKTDLNPDNLQGGDDLD. Residues Lys101 and Lys107 each participate in a glycyl lysine isopeptide (Lys-Gly) (interchain with G-Cter in ubiquitin) cross-link. Tyr125 carries the post-translational modification Phosphotyrosine. The Phosphagen kinase C-terminal domain occupies 125–367; that stretch reads YVLSSRVRTG…KLLIEMEQRL (243 aa). ATP contacts are provided by residues 128-132, Arg130, Arg132, and His191; that span reads SSRVR. Residues 130–138 form an internal MTS-like signal region; it reads RVRTGRSIR. Phosphoserine is present on Ser199. Creatine is bound at residue Glu232. Residue Arg236 coordinates ATP. At Tyr269 the chain carries 3'-nitrotyrosine. Ser285 is a creatine binding site. Arg292 provides a ligand contact to ATP. Ser309 bears the Phosphoserine mark. ATP-binding positions include Arg320, 320-325, and Asp335; that span reads RGTGGV. At Thr322 the chain carries Phosphothreonine. Lys381 participates in a covalent cross-link: Glycyl lysine isopeptide (Lys-Gly) (interchain with G-Cter in ubiquitin).

This sequence belongs to the ATP:guanido phosphotransferase family. In terms of assembly, dimer of identical or non-identical chains, which can be either B (brain type) or M (muscle type). With MM being the major form in skeletal muscle and myocardium, MB existing in myocardium, and BB existing in many tissues, especially brain. Interacts with SLC12A6 (via C-terminus); the interaction may be required for SLC12A6 potassium-chloride cotransport activity. Post-translationally, ubiquitinated by the ECS(ASB9) complex, leading to its degradation by the proteasome.

The protein resides in the cytoplasm. It is found in the cytosol. The protein localises to the mitochondrion. Its subcellular location is the cell membrane. It carries out the reaction creatine + ATP = N-phosphocreatine + ADP + H(+). In terms of biological role, reversibly catalyzes the transfer of phosphate between ATP and various phosphogens (e.g. creatine phosphate). Creatine kinase isoenzymes play a central role in energy transduction in tissues with large, fluctuating energy demands, such as skeletal muscle, heart, brain and spermatozoa. Acts as a key regulator of adaptive thermogenesis as part of the futile creatine cycle: localizes to the mitochondria of thermogenic fat cells and acts by mediating phosphorylation of creatine to initiate a futile cycle of creatine phosphorylation and dephosphorylation. During the futile creatine cycle, creatine and N-phosphocreatine are in a futile cycle, which dissipates the high energy charge of N-phosphocreatine as heat without performing any mechanical or chemical work. This Homo sapiens (Human) protein is Creatine kinase B-type.